The primary structure comprises 1269 residues: Furin-like protease 1, isoforms 1/1-X/2 (1269 aa).

Residues 1–57 (MKNDVVRWSRQPTSNTTNSSSSSRSDSNSTHKHRSKSNKLNARQLGSNAARSCQQRS) form a disordered region. Residues 13 to 28 (TSNTTNSSSSSRSDSN) show a composition bias toward low complexity. 3 N-linked (GlcNAc...) asparagine glycosylation sites follow: N15, N18, and N28. Positions 38–57 (NKLNARQLGSNAARSCQQRS) are enriched in polar residues. An N-linked (GlcNAc...) asparagine glycan is attached at N108. A helical transmembrane segment spans residues 119-139 (VFLLALQFSAVVFLCNINVGF). The span at 150–163 (SAGGSSPAAPSSAP) shows a compositional bias: low complexity. Positions 150–187 (SAGGSSPAAPSSAPSSPPTVAVPPPPPPSSALKVDPNG) are disordered. Residues 164–178 (SSPPTVAVPPPPPPS) show a composition bias toward pro residues. Residue N333 is glycosylated (N-linked (GlcNAc...) asparagine). Residues 340–654 (MWYLNRGGGL…YGLMDAAEMV (315 aa)) form the Peptidase S8 domain. Catalysis depends on charge relay system residues D372 and H413. N-linked (GlcNAc...) asparagine glycosylation is present at N426. 2 disulfides stabilise this stretch: C430-C579 and C522-C552. S587 serves as the catalytic Charge relay system. A glycan (N-linked (GlcNAc...) asparagine) is linked at N606. One can recognise a P/Homo B domain in the interval 662–793 (AVPEQQRCEI…SLIFYGTTQS (132 aa)). C669 and C695 are joined by a disulfide. N-linked (GlcNAc...) asparagine glycosylation is found at N727 and N814. Disordered stretches follow at residues 796–875 (PNDP…PPKQ), 891–1015 (ANGK…NSRI), 1031–1050 (ELEP…AKQG), and 1057–1083 (LFKP…PSQT). 2 stretches are compositionally biased toward low complexity: residues 811–821 (TTPNSSSTTSN) and 835–851 (PNNF…LPLG). N-linked (GlcNAc...) asparagine glycosylation is present at N857. Positions 858–868 (KSSYVTNNPLL) are enriched in polar residues. N-linked (GlcNAc...) asparagine glycans are attached at residues N897 and N908. Composition is skewed to low complexity over residues 905–915 (NKGNKSNNGNK) and 929–940 (TTQSTIIQTSTS). Positions 975 to 985 (KSYDEKSRKVV) are enriched in basic and acidic residues. A glycan (N-linked (GlcNAc...) asparagine) is linked at N994. Residues 1005 to 1014 (ESTTTSSNSR) are compositionally biased toward polar residues. Polar residues predominate over residues 1062–1074 (NGGNSRQGNTKKS). A helical transmembrane segment spans residues 1233 to 1253 (LGLSLLFFMIMQVFFLNFKHA).

This sequence belongs to the peptidase S8 family. Furin subfamily. Ca(2+) serves as cofactor. In adults, isoform 1-X is expressed in CNS, fat body and female reproductive tissues, and in embryos, in CNS, tracheal pits, hindgut, posterior spiracles and anal pads.

It is found in the golgi apparatus membrane. It catalyses the reaction Release of mature proteins from their proproteins by cleavage of -Arg-Xaa-Yaa-Arg-|-Zaa- bonds, where Xaa can be any amino acid and Yaa is Arg or Lys. Releases albumin, complement component C3 and von Willebrand factor from their respective precursors.. In terms of biological role, furin is likely to represent the ubiquitous endoprotease activity within constitutive secretory pathways and capable of cleavage at the RX(K/R)R consensus motif. The protein is Furin-like protease 1, isoforms 1/1-X/2 (Fur1) of Drosophila melanogaster (Fruit fly).